The sequence spans 255 residues: MNLIPAIDLMNGKCVRLFKGDFNKRKDFTKEPHEQAKFWESEGAKCIHIVDLDAAKTGSPTNDKSIKKIAKTVNIPIQIGGGIRSQERIEQLFSYGIEKVIMGTSAIENKELVKDLSNKYPGRIIVGIDAKNGKVSTRGWLEQSNIFATDLVKEFSSFKIASFIVTDINTDGTLEGTNEEFIKSILEITDIPVIASGGVGSISDLLSLVKFENSGLFGVIVGKALYENKFTIKEANNVLSSERLNDFDLNRNYYA.

Aspartate 8 acts as the Proton acceptor in catalysis. Aspartate 129 functions as the Proton donor in the catalytic mechanism.

Belongs to the HisA/HisF family.

It is found in the cytoplasm. It catalyses the reaction 1-(5-phospho-beta-D-ribosyl)-5-[(5-phospho-beta-D-ribosylamino)methylideneamino]imidazole-4-carboxamide = 5-[(5-phospho-1-deoxy-D-ribulos-1-ylimino)methylamino]-1-(5-phospho-beta-D-ribosyl)imidazole-4-carboxamide. The protein operates within amino-acid biosynthesis; L-histidine biosynthesis; L-histidine from 5-phospho-alpha-D-ribose 1-diphosphate: step 4/9. This Prochlorococcus marinus (strain MIT 9301) protein is 1-(5-phosphoribosyl)-5-[(5-phosphoribosylamino)methylideneamino] imidazole-4-carboxamide isomerase.